The primary structure comprises 229 residues: Secreted RxLR effector protein PITG_22926 (229 aa).

A signal peptide spans 1–23 (MRCNHTLCVVAITFLVSWSQTLS). The RxLR-dEER motif lies at 34–45 (PLVRSVSATEER).

Belongs to the RxLR effector family.

Its subcellular location is the secreted. It localises to the host nucleus. Secreted effector that acts as a RNA silencing suppressor, probably by inhibiting the biogenesis of small RNAs in the host plant, to manipulate host immune responses and promote Phytophthora infection. The chain is Secreted RxLR effector protein PITG_22926 from Phytophthora infestans (strain T30-4) (Potato late blight agent).